Here is a 395-residue protein sequence, read N- to C-terminus: Flagellin D (395 aa).

Belongs to the bacterial flagellin family.

It localises to the secreted. The protein resides in the bacterial flagellum. In terms of biological role, flagellin is the subunit protein which polymerizes to form the filaments of bacterial flagella. This chain is Flagellin D (flaD), found in Rhizobium meliloti (Ensifer meliloti).